Here is a 943-residue protein sequence, read N- to C-terminus: Isoleucine--tRNA ligase (943 aa).

The 'HIGH' region signature appears at 58 to 68 (PYANGSIHIGH). E567 lines the L-isoleucyl-5'-AMP pocket. The 'KMSKS' region motif lies at 608–612 (KMSKS). K611 contacts ATP. The Zn(2+) site is built by C906, C909, C926, and C929.

Belongs to the class-I aminoacyl-tRNA synthetase family. IleS type 1 subfamily. Monomer. The cofactor is Zn(2+).

Its subcellular location is the cytoplasm. The enzyme catalyses tRNA(Ile) + L-isoleucine + ATP = L-isoleucyl-tRNA(Ile) + AMP + diphosphate. Functionally, catalyzes the attachment of isoleucine to tRNA(Ile). As IleRS can inadvertently accommodate and process structurally similar amino acids such as valine, to avoid such errors it has two additional distinct tRNA(Ile)-dependent editing activities. One activity is designated as 'pretransfer' editing and involves the hydrolysis of activated Val-AMP. The other activity is designated 'posttransfer' editing and involves deacylation of mischarged Val-tRNA(Ile). This Ectopseudomonas mendocina (strain ymp) (Pseudomonas mendocina) protein is Isoleucine--tRNA ligase.